The primary structure comprises 37 residues: Large ribosomal subunit protein bL36 (37 aa).

The protein belongs to the bacterial ribosomal protein bL36 family.

In Brevibacillus brevis (strain 47 / JCM 6285 / NBRC 100599), this protein is Large ribosomal subunit protein bL36.